Consider the following 1889-residue polypeptide: Bromodomain adjacent to zinc finger domain protein 2A (1889 aa).

Disordered stretches follow at residues 1-59, 384-433, and 479-526; these read MEME…NGLS, FGLN…SPAA, and TTPV…GAVA. Over residues 35–59 the composition is skewed to polar residues; sequence TNGSPMNFPQQGKSLNGDVNVNGLS. The interval 332 to 726 is required for TTF1 binding; the sequence is EGNPVISALD…ESQTPVQGQA (395 aa). Over residues 423-433 the composition is skewed to low complexity; that stretch reads PAVSPTASPAA. Polar residues-rich tracts occupy residues 479–489 and 498–509; these read TTPVTSPQGSP and QTVSPARKNVSS. Residue T499 is modified to Phosphothreonine. Residue S501 is modified to Phosphoserine. One can recognise an MBD domain in the interval 538 to 609; the sequence is IATPEEVRLP…EHFSFSPRMP (72 aa). T540 carries the post-translational modification Phosphothreonine. A Phosphoserine modification is found at S605. The disordered stretch occupies residues 638–791; the sequence is QAITGKRGRP…ARPSCRADKT (154 aa). 2 consecutive DNA-binding regions (a.T hook) follow at residues 641–653 and 662–674; these read TGKR…NEKA and KRGR…IKMP. A compositionally biased stretch (basic and acidic residues) spans 648 to 660; sequence RNNEKAKNKEVPK. The span at 661–670 shows a compositional bias: basic residues; that stretch reads VKRGRGRPPK. An N6-acetyllysine; by KAT8 modification is found at K672. Positions 678-701 are enriched in basic and acidic residues; the sequence is NKTDNRLPKKLETQEILSEDDKAK. The stretch at 686–813 forms a coiled coil; that stretch reads KKLETQEILS…QQAILEEMKK (128 aa). Residues 702–713 show a composition bias toward basic residues; sequence MTKNKKKMRQKV. Residues 716-726 show a composition bias toward polar residues; that stretch reads GESQTPVQGQA. Composition is skewed to basic and acidic residues over residues 731-740 and 748-791; these read KQDTKSLKQK and AEKE…ADKT. Position 790 is an N6-acetyllysine (K790). One can recognise a DDT domain in the interval 839–904; that stretch reads SRAFSDCLTI…LKAALHDPGL (66 aa). K857 participates in a covalent cross-link: Glycyl lysine isopeptide (Lys-Gly) (interchain with G-Cter in SUMO2). A disordered region spans residues 1039-1063; that stretch reads EETSGIEEEEEEENTTAVHGRRGRK. S1042 carries the phosphoserine modification. Acidic residues predominate over residues 1042-1052; that stretch reads SGIEEEEEEEN. Glycyl lysine isopeptide (Lys-Gly) (interchain with G-Cter in SUMO2) cross-links involve residues K1141 and K1163. Disordered stretches follow at residues 1147 to 1247 and 1269 to 1397; these read LMEV…GQSQ and LSSS…GRPP. S1174 is modified (phosphoserine). Positions 1176-1188 form a DNA-binding region, a.T hook 3; sequence ARSRGRPRKPKPG. 3 stretches are compositionally biased toward polar residues: residues 1190–1231, 1269–1278, and 1331–1346; these read LQPQ…QPSS, LSSSVLTPDS, and DQPT…SKPM. S1374, S1377, and S1383 each carry phosphoserine. Positions 1390–1402 form a DNA-binding region, a.T hook 4; it reads PKRRGRPPSKFFK. The residue at position 1545 (S1545) is a Phosphoserine. Residues K1662 and K1695 each participate in a glycyl lysine isopeptide (Lys-Gly) (interchain with G-Cter in SUMO2) cross-link. The segment at 1662–1712 adopts a PHD-type zinc-finger fold; it reads KVTCLVCRKGDNDEFLLLCDGCDRGCHIYCHRPKMEAVPEGDWFCAVCLSQ. Residues 1720 to 1778 form a disordered region; the sequence is QRPGFPKRGQKRKSSFPLTFPEGDSRRRMLSRSRDSPAVPRYPEDGLSPPKRRRHSMRS. Phosphoserine is present on S1733. Phosphothreonine is present on T1738. Residues 1742–1754 are compositionally biased toward basic and acidic residues; the sequence is GDSRRRMLSRSRD. Phosphoserine occurs at positions 1755 and 1767. Residues 1769-1778 are compositionally biased toward basic residues; the sequence is PKRRRHSMRS. The 105-residue stretch at 1777–1881 folds into the Bromo domain; the sequence is RSHHSDLTFC…RFFESRWEEF (105 aa).

This sequence belongs to the WAL family. In terms of assembly, component of the NoRC-1 ISWI chromatin remodeling complex at least composed of SMARCA1 and BAZ2A/TIP5, which regulates the spacing of histone octamers on the DNA template to facilitate access to DNA. Within the NoRC-1 ISWI chromatin remodeling complex interacts with SMARCA1; the interaction is direct. Component of the NoRC-5 ISWI chromatin remodeling complex (also called the NoRC nucleolar-remodeling complex), at least composed of SMARCA5/SNF2H and BAZ2A/TIP5, which regulates the spacing of histone octamers on the DNA template to facilitate access to DNA. Within the NoRC-5 ISWI chromatin remodeling complexes interacts with SMARCA5/SNF2H; the interaction is direct. Interacts with TTF1; the interaction is required for recruitment of the NoRC-5 ISWI chromatin remodeling complex to rDNA. Interacts with HDAC1. Interacts with SIN3A. Interacts with DNMT1 and DNM3B. Interacts with BEND3 and USP21. In terms of processing, ubiquitinated. Deubiquitinated by USP21 leading to its stabilization. Acetylation at Lys-672 by KAT8/MOF promotes its dissociation from pRNA, affecting heterochromatin formation, nucleosome positioning and rDNA silencing. Deacetylation by SIRT1 in late S phase enhances pRNA-binding, allowing de novo DNA methylation and heterochromatin formation. Acetylation is high during S phase and declines to background levels in late S phase when the silent copies of rRNA genes are replicated.

The protein localises to the nucleus. It is found in the nucleolus. In terms of biological role, regulatory subunit of the ATP-dependent NoRC-1 and NoRC-5 ISWI chromatin remodeling complexes, which form ordered nucleosome arrays on chromatin and facilitate access to DNA during DNA-templated processes such as DNA replication, transcription, and repair. Both complexes regulate the spacing of nucleosomes along the chromatin and have the ability to slide mononucleosomes to the center of a DNA template. Directly stimulates the ATPase activity of SMARCA5 in the NoRC-5 ISWI chromatin remodeling complex. The NoRC-1 ISWI chromatin remodeling complex has a lower ATP hydrolysis rate than the NoRC-5 ISWI chromatin remodeling complex. Within the NoRC-5 ISWI chromatin remodeling complex, mediates silencing of a fraction of rDNA by recruiting histone-modifying enzymes and DNA methyltransferases, leading to heterochromatin formation and transcriptional silencing. In the complex, it plays a central role by being recruited to rDNA and by targeting chromatin modifying enzymes such as HDAC1, leading to repress RNA polymerase I transcription. Recruited to rDNA via its interaction with TTF1 and its ability to recognize and bind histone H4 acetylated on 'Lys-16' (H4K16ac), leading to deacetylation of H4K5ac, H4K8ac, H4K12ac but not H4K16ac. Specifically binds pRNAs, 150-250 nucleotide RNAs that are complementary in sequence to the rDNA promoter; pRNA-binding is required for heterochromatin formation and rDNA silencing. The sequence is that of Bromodomain adjacent to zinc finger domain protein 2A (Baz2a) from Mus musculus (Mouse).